We begin with the raw amino-acid sequence, 540 residues long: Chaperonin GroEL 1 (540 aa).

ATP contacts are provided by residues 30 to 33 (TLGP), lysine 51, 87 to 91 (DGTTT), glycine 415, 480 to 482 (NAA), and aspartate 496.

It belongs to the chaperonin (HSP60) family. As to quaternary structure, forms a cylinder of 14 subunits composed of two heptameric rings stacked back-to-back. Interacts with the co-chaperonin GroES.

It is found in the cytoplasm. The enzyme catalyses ATP + H2O + a folded polypeptide = ADP + phosphate + an unfolded polypeptide.. Functionally, together with its co-chaperonin GroES, plays an essential role in assisting protein folding. The GroEL-GroES system forms a nano-cage that allows encapsulation of the non-native substrate proteins and provides a physical environment optimized to promote and accelerate protein folding. In Bradyrhizobium diazoefficiens (strain JCM 10833 / BCRC 13528 / IAM 13628 / NBRC 14792 / USDA 110), this protein is Chaperonin GroEL 1.